Consider the following 552-residue polypeptide: Urocanate hydratase (552 aa).

Residues 49 to 50, glutamine 127, 173 to 175, aspartate 193, 239 to 240, 260 to 264, 270 to 271, and tyrosine 319 each bind NAD(+); these read GG, GMG, NA, QTSAH, and YI. Residue cysteine 407 is part of the active site. Residue glycine 489 participates in NAD(+) binding.

It belongs to the urocanase family. NAD(+) is required as a cofactor.

The protein localises to the cytoplasm. It catalyses the reaction 4-imidazolone-5-propanoate = trans-urocanate + H2O. The protein operates within amino-acid degradation; L-histidine degradation into L-glutamate; N-formimidoyl-L-glutamate from L-histidine: step 2/3. Catalyzes the conversion of urocanate to 4-imidazolone-5-propionate. This Bacillus cereus (strain AH187) protein is Urocanate hydratase.